We begin with the raw amino-acid sequence, 337 residues long: Ketol-acid reductoisomerase (NADP(+)) (337 aa).

Residues 1–180 (MKIYYDTDVN…GGGRAGIIET (180 aa)) form the KARI N-terminal Rossmann domain. Residues 24–27 (YGSQ), arginine 47, serine 51, and 81–84 (DELQ) contribute to the NADP(+) site. The active site involves histidine 106. NADP(+) is bound at residue glycine 132. Residues 181–326 (TFKDETETDL…EKLRAMMPWL (146 aa)) enclose the KARI C-terminal knotted domain. Aspartate 189, glutamate 193, glutamate 225, and glutamate 229 together coordinate Mg(2+). Serine 250 serves as a coordination point for substrate.

Belongs to the ketol-acid reductoisomerase family. Requires Mg(2+) as cofactor.

The enzyme catalyses (2R)-2,3-dihydroxy-3-methylbutanoate + NADP(+) = (2S)-2-acetolactate + NADPH + H(+). It carries out the reaction (2R,3R)-2,3-dihydroxy-3-methylpentanoate + NADP(+) = (S)-2-ethyl-2-hydroxy-3-oxobutanoate + NADPH + H(+). It functions in the pathway amino-acid biosynthesis; L-isoleucine biosynthesis; L-isoleucine from 2-oxobutanoate: step 2/4. Its pathway is amino-acid biosynthesis; L-valine biosynthesis; L-valine from pyruvate: step 2/4. Involved in the biosynthesis of branched-chain amino acids (BCAA). Catalyzes an alkyl-migration followed by a ketol-acid reduction of (S)-2-acetolactate (S2AL) to yield (R)-2,3-dihydroxy-isovalerate. In the isomerase reaction, S2AL is rearranged via a Mg-dependent methyl migration to produce 3-hydroxy-3-methyl-2-ketobutyrate (HMKB). In the reductase reaction, this 2-ketoacid undergoes a metal-dependent reduction by NADPH to yield (R)-2,3-dihydroxy-isovalerate. The sequence is that of Ketol-acid reductoisomerase (NADP(+)) from Thermodesulfovibrio yellowstonii (strain ATCC 51303 / DSM 11347 / YP87).